A 253-amino-acid chain; its full sequence is Triosephosphate isomerase (253 aa).

A substrate-binding site is contributed by 9 to 11; it reads NWK. The active-site Electrophile is His98. Glu170 functions as the Proton acceptor in the catalytic mechanism. Residues Gly176, Ser216, and 237-238 contribute to the substrate site; that span reads GG.

Belongs to the triosephosphate isomerase family. As to quaternary structure, homodimer.

Its subcellular location is the cytoplasm. It carries out the reaction D-glyceraldehyde 3-phosphate = dihydroxyacetone phosphate. Its pathway is carbohydrate biosynthesis; gluconeogenesis. The protein operates within carbohydrate degradation; glycolysis; D-glyceraldehyde 3-phosphate from glycerone phosphate: step 1/1. In terms of biological role, involved in the gluconeogenesis. Catalyzes stereospecifically the conversion of dihydroxyacetone phosphate (DHAP) to D-glyceraldehyde-3-phosphate (G3P). This is Triosephosphate isomerase from Amoebophilus asiaticus (strain 5a2).